The primary structure comprises 84 residues: uncharacterized protein (84 aa).

2 consecutive transmembrane segments (helical) span residues Ile-27–Leu-47 and Ile-52–Ile-72.

The protein to M.tuberculosis Rv2876.

Its subcellular location is the cell membrane. This is an uncharacterized protein from Mycobacterium leprae (strain TN).